The sequence spans 428 residues: 47 kDa outer membrane protein (428 aa).

The N-terminal stretch at 1 to 25 (MAKTSKFTQTLLASALAVVAGSASA) is a signal peptide.

This sequence belongs to the OmpP1/FadL family.

It localises to the cell outer membrane. The polypeptide is 47 kDa outer membrane protein (Pasteurella multocida (strain Pm70)).